The sequence spans 188 residues: MSSETPNHRDSVYERLLRERIIFLGSQVDDEIANELCAQILLLSAEDPTRDISLYINSPGGSVTAGMAIYDTMKYAPCDIATYGMGLAASMGQFLLSAGTKGKRYALPHARIMMHQPSAGVGGTAADIAIQAEQFAYTKREMAELIAEFTGQTVEQITKDSDRDRWFTAQQAKEYGFVDHVITSAKES.

Ser90 functions as the Nucleophile in the catalytic mechanism. Residue His115 is part of the active site.

It belongs to the peptidase S14 family. In terms of assembly, fourteen ClpP subunits assemble into 2 heptameric rings which stack back to back to give a disk-like structure with a central cavity, resembling the structure of eukaryotic proteasomes.

Its subcellular location is the cytoplasm. It catalyses the reaction Hydrolysis of proteins to small peptides in the presence of ATP and magnesium. alpha-casein is the usual test substrate. In the absence of ATP, only oligopeptides shorter than five residues are hydrolyzed (such as succinyl-Leu-Tyr-|-NHMec, and Leu-Tyr-Leu-|-Tyr-Trp, in which cleavage of the -Tyr-|-Leu- and -Tyr-|-Trp bonds also occurs).. In terms of biological role, cleaves peptides in various proteins in a process that requires ATP hydrolysis. Has a chymotrypsin-like activity. Plays a major role in the degradation of misfolded proteins. The sequence is that of ATP-dependent Clp protease proteolytic subunit 1 from Corynebacterium jeikeium (strain K411).